A 324-amino-acid polypeptide reads, in one-letter code: Beta-ketoacyl-[acyl-carrier-protein] synthase III (324 aa).

Catalysis depends on residues Cys-114 and His-246. Residues 247–251 are ACP-binding; it reads QANLR. Asn-276 is a catalytic residue.

It belongs to the thiolase-like superfamily. FabH family. As to quaternary structure, homodimer.

The protein localises to the cytoplasm. It carries out the reaction malonyl-[ACP] + acetyl-CoA + H(+) = 3-oxobutanoyl-[ACP] + CO2 + CoA. It participates in lipid metabolism; fatty acid biosynthesis. Its function is as follows. Catalyzes the condensation reaction of fatty acid synthesis by the addition to an acyl acceptor of two carbons from malonyl-ACP. Catalyzes the first condensation reaction which initiates fatty acid synthesis and may therefore play a role in governing the total rate of fatty acid production. Possesses both acetoacetyl-ACP synthase and acetyl transacylase activities. Its substrate specificity determines the biosynthesis of branched-chain and/or straight-chain of fatty acids. The sequence is that of Beta-ketoacyl-[acyl-carrier-protein] synthase III from Campylobacter jejuni subsp. jejuni serotype O:2 (strain ATCC 700819 / NCTC 11168).